The sequence spans 150 residues: Ribonuclease P protein subunit p21 (150 aa).

Residue Ala2 is modified to N-acetylalanine. Residues Cys62, Cys65, Cys92, and Cys95 each coordinate Zn(2+). The tract at residues Gln121–Glu150 is disordered. Positions Asn140–Glu150 are enriched in polar residues.

This sequence belongs to the eukaryotic/archaeal RNase P protein component 4 family. As to quaternary structure, RNase P consists of a catalytic RNA moiety and about 10 protein subunits; POP1, POP4, POP5, POP7, RPP14, RPP21, RPP25, RPP30, RPP38 and RPP40. Within the RNase P complex, POP1, POP7 and RPP25 form the 'finger' subcomplex, POP5, RPP14, RPP40 and homodimeric RPP30 form the 'palm' subcomplex, and RPP21, POP4 and RPP38 form the 'wrist' subcomplex. All subunits of the RNase P complex interact with the catalytic RNA.

The protein resides in the nucleus. The protein localises to the nucleolus. Component of ribonuclease P, a ribonucleoprotein complex that generates mature tRNA molecules by cleaving their 5'-ends. This is Ribonuclease P protein subunit p21 (Rpp21) from Mus musculus (Mouse).